A 105-amino-acid polypeptide reads, in one-letter code: Small ribosomal subunit protein uS10 (105 aa).

Belongs to the universal ribosomal protein uS10 family. In terms of assembly, part of the 30S ribosomal subunit.

Functionally, involved in the binding of tRNA to the ribosomes. This Maridesulfovibrio salexigens (strain ATCC 14822 / DSM 2638 / NCIMB 8403 / VKM B-1763) (Desulfovibrio salexigens) protein is Small ribosomal subunit protein uS10.